The chain runs to 889 residues: Cytoplasmic aconitate hydratase (889 aa).

Substrate-binding positions include Gln-86 and 205–207; that span reads DSH. Residues Cys-437, Cys-503, and Cys-506 each contribute to the [4Fe-4S] cluster site. Substrate contacts are provided by residues Arg-536, Arg-541, Arg-699, and 779–780; that span reads SR.

The protein belongs to the aconitase/IPM isomerase family. In terms of assembly, interacts (when associated with the 4Fe-4S) with FBXL5. Interacts with frataxin(81-210). The cofactor is [4Fe-4S] cluster.

It is found in the cytoplasm. It localises to the cytosol. It catalyses the reaction citrate = D-threo-isocitrate. Its function is as follows. Bifunctional iron sensor that switches between 2 activities depending on iron availability. Iron deprivation, promotes its mRNA binding activity through which it regulates the expression of genes involved in iron uptake, sequestration and utilization. Binds to iron-responsive elements (IRES) in the untranslated region of target mRNAs preventing for instance the translation of ferritin and aminolevulinic acid synthase and stabilizing the transferrin receptor mRNA. Conversely, when cellular iron levels are high, binds a 4Fe-4S cluster which precludes RNA binding activity and promotes the aconitase activity, the isomerization of citrate to isocitrate via cis-aconitate. This is Cytoplasmic aconitate hydratase (Aco1) from Mus musculus (Mouse).